We begin with the raw amino-acid sequence, 348 residues long: Dihydroorotase (348 aa).

The Zn(2+) site is built by H17 and H19. Substrate-binding positions include 19–21 (HLR) and N45. The Zn(2+) site is built by K103, H140, and H178. An N6-carboxylysine modification is found at K103. H140 serves as a coordination point for substrate. L223 provides a ligand contact to substrate. Zn(2+) is bound at residue D251. D251 is a catalytic residue. Residues H255 and A267 each coordinate substrate.

It belongs to the metallo-dependent hydrolases superfamily. DHOase family. Class II DHOase subfamily. As to quaternary structure, homodimer. Requires Zn(2+) as cofactor.

The catalysed reaction is (S)-dihydroorotate + H2O = N-carbamoyl-L-aspartate + H(+). It participates in pyrimidine metabolism; UMP biosynthesis via de novo pathway; (S)-dihydroorotate from bicarbonate: step 3/3. In terms of biological role, catalyzes the reversible cyclization of carbamoyl aspartate to dihydroorotate. This Enterobacter sp. (strain 638) protein is Dihydroorotase.